Reading from the N-terminus, the 271-residue chain is Large ribosomal subunit protein uL18 (271 aa).

A compositionally biased stretch (basic and acidic residues) spans 245–264 (IRENPCPPKKERTKPADAKR). Positions 245–271 (IRENPCPPKKERTKPADAKRWSPQAHL) are disordered.

Belongs to the universal ribosomal protein uL18 family. In terms of assembly, component of the large ribosomal subunit (LSU).

The protein localises to the cytoplasm. The protein resides in the nucleus. In terms of biological role, component of the ribosome, a large ribonucleoprotein complex responsible for the synthesis of proteins in the cell. The small ribosomal subunit (SSU) binds messenger RNAs (mRNAs) and translates the encoded message by selecting cognate aminoacyl-transfer RNA (tRNA) molecules. The large subunit (LSU) contains the ribosomal catalytic site termed the peptidyl transferase center (PTC), which catalyzes the formation of peptide bonds, thereby polymerizing the amino acids delivered by tRNAs into a polypeptide chain. The nascent polypeptides leave the ribosome through a tunnel in the LSU and interact with protein factors that function in enzymatic processing, targeting, and the membrane insertion of nascent chains at the exit of the ribosomal tunnel. This is Large ribosomal subunit protein uL18 (RPL5) from Dunaliella salina (Green alga).